Reading from the N-terminus, the 255-residue chain is Probable transcriptional regulatory protein CMS0715 (255 aa).

It belongs to the TACO1 family.

Its subcellular location is the cytoplasm. The polypeptide is Probable transcriptional regulatory protein CMS0715 (Clavibacter sepedonicus (Clavibacter michiganensis subsp. sepedonicus)).